Consider the following 541-residue polypeptide: Kinesin light chain 1 (541 aa).

Residues 27–156 are a coiled coil; that stretch reads KTKQVIQGLE…HLEFMNQLKK (130 aa). Over residues 156–176 the composition is skewed to basic and acidic residues; it reads KYDDDISPSEDKDSDSSKEPL. The interval 156-201 is disordered; it reads KYDDDISPSEDKDSDSSKEPLDDLFPNDEDEPGQGIQHSDSSAAAA. At Ser-162 the chain carries Phosphoserine. TPR repeat units lie at residues 211–244, 253–286, 295–328, 337–370, and 380–413; these read LRTLHNLVIQYASQGRYEVAVPSCKQALEDLEKT, ATMLNILALVYRDQNKYKDAANLLNDALAIREKT, AATLNNLAVLYGKRGKYKEAEPLCKRALEIREKV, AKQLNNLALLCQNQGKYEEVEYYYQRALGIYQTK, and AKTKNNLASCYLKQGKFKQAETLYKEILTRAHEA. A Phosphotyrosine modification is found at Tyr-448. Residue Ser-459 is modified to Phosphoserine. A TPR 6 repeat occupies 463 to 496; sequence TTTLKNLGALYRRQGKFEAAETLEEAAMRSRKQG. Residues 493-541 are disordered; sequence RKQGLDNVHKQRVAEVLNDPESMEKRRSRESLNMDVVKYESGPDGGEEA. Basic and acidic residues-rich tracts occupy residues 495–505 and 514–524; these read QGLDNVHKQRV and SMEKRRSRESL. A phosphoserine; by AMPK mark is found at Ser-520 and Ser-523.

Belongs to the kinesin light chain family. Oligomeric complex composed of two heavy chains and two light chains. Interacts with SPAG9. Interacts with ATCAY; may link mitochondria to KLC1 and regulate mitochondria localization into neuron projections. Interacts (via TPR repeats) with TOR1A; the interaction associates TOR1A with the kinesin oligomeric complex. Interacts with BORCS5. Interacts with MAPK8IP3/JIP3 and NTRK2/TRKB; interaction with NTRK2/TRKB is mediated by MAPK8IP3/JIP3. Interacts with CLSTN1; phosphorylation at Ser-459 inhibits interaction with CLSTN1. Phosphorylation at Ser-459 by ERK inhibits interaction with CLSTN1 and localization to cytoplasmic vesicles.

The protein localises to the cell projection. Its subcellular location is the growth cone. It is found in the cytoplasmic vesicle. It localises to the cytoplasm. The protein resides in the cytoskeleton. In terms of biological role, kinesin is a microtubule-associated force-producing protein that may play a role in organelle transport. The light chain may function in coupling of cargo to the heavy chain or in the modulation of its ATPase activity. This chain is Kinesin light chain 1 (Klc1), found in Mus musculus (Mouse).